A 99-amino-acid chain; its full sequence is U1-theraphotoxin-Lsp1b (99 aa).

An N-terminal signal peptide occupies residues 1–23 (MRSLTLAALLLCSLLLVFHTSAA). Positions 24 to 50 (EELQAQEGHLMIPGDTDTALETVDDER) are excised as a propeptide. 4 disulfide bridges follow: Cys54–Cys67, Cys58–Cys91, Cys72–Cys74, and Cys85–Cys96.

The protein belongs to the neurotoxin 12 (Hwtx-2) family. 04 (lasiotoxin) subfamily. As to expression, expressed by the venom gland.

It localises to the secreted. Functionally, toxin that causes irreversible contractile paralysis into adult Aedes aegypti resulting in 100% mortality after 24 hours. The polypeptide is U1-theraphotoxin-Lsp1b (Lasiodora sp. (strain IBSP 8539) (Brazilian salmon pink birdeater)).